The chain runs to 187 residues: Cytochrome c oxidase assembly protein CtaG (187 aa).

Residues 1 to 9 (MSKKSNKNL) lie on the Cytoplasmic side of the membrane. Residues 10-30 (AFSLLGLIISMVLLSFASVPI) traverse the membrane as a helical; Signal-anchor for type II membrane protein segment. Topologically, residues 31-187 (YNLFCKVTGY…IASLRGNTKY (157 aa)) are periplasmic.

This sequence belongs to the COX11/CtaG family.

The protein resides in the cell inner membrane. Exerts its effect at some terminal stage of cytochrome c oxidase synthesis, probably by being involved in the insertion of the copper B into subunit I. The protein is Cytochrome c oxidase assembly protein CtaG of Rickettsia felis (strain ATCC VR-1525 / URRWXCal2) (Rickettsia azadi).